Here is a 189-residue protein sequence, read N- to C-terminus: Elongation factor P (189 aa).

It belongs to the elongation factor P family.

It localises to the cytoplasm. The protein operates within protein biosynthesis; polypeptide chain elongation. Its function is as follows. Involved in peptide bond synthesis. Stimulates efficient translation and peptide-bond synthesis on native or reconstituted 70S ribosomes in vitro. Probably functions indirectly by altering the affinity of the ribosome for aminoacyl-tRNA, thus increasing their reactivity as acceptors for peptidyl transferase. The protein is Elongation factor P of Orientia tsutsugamushi (strain Boryong) (Rickettsia tsutsugamushi).